The following is a 23-amino-acid chain: Major prohead-scaffolding core protein Gp22 (23 aa).

Residues 1–23 are disordered; the sequence is KAEEEVEKNKEEAEEEAEKKIAE. The segment covering 7-23 has biased composition (basic and acidic residues); that stretch reads EKNKEEAEEEAEKKIAE.

Gp22 functions in head assembly. Functionally, internal peptide VII: Cleavage product of Gp22 that is incorporated into the mature phage head. In Enterobacteria phage T2 (Bacteriophage T2), this protein is Major prohead-scaffolding core protein Gp22 (22).